The primary structure comprises 182 residues: Ribosome maturation factor RimM (182 aa).

A PRC barrel domain is found at 101-182 (VDEYYWSDLK…RIYVNWGVDY (82 aa)).

Belongs to the RimM family. As to quaternary structure, binds ribosomal protein uS19.

It localises to the cytoplasm. In terms of biological role, an accessory protein needed during the final step in the assembly of 30S ribosomal subunit, possibly for assembly of the head region. Essential for efficient processing of 16S rRNA. May be needed both before and after RbfA during the maturation of 16S rRNA. It has affinity for free ribosomal 30S subunits but not for 70S ribosomes. This is Ribosome maturation factor RimM from Acinetobacter baylyi (strain ATCC 33305 / BD413 / ADP1).